We begin with the raw amino-acid sequence, 174 residues long: Small ribosomal subunit protein uS5c (174 aa).

An S5 DRBM domain is found at 17 to 80; it reads WEERVVQVKR…TDAKKHLVTV (64 aa).

Belongs to the universal ribosomal protein uS5 family. As to quaternary structure, part of the 30S ribosomal subunit. Contacts protein S4.

It localises to the plastid. The protein localises to the chloroplast. In terms of biological role, with S4 and S12 plays an important role in translational accuracy. This Pyropia yezoensis (Susabi-nori) protein is Small ribosomal subunit protein uS5c (rps5).